The primary structure comprises 119 residues: Large ribosomal subunit protein uL18 (119 aa).

It belongs to the universal ribosomal protein uL18 family. As to quaternary structure, part of the 50S ribosomal subunit; part of the 5S rRNA/L5/L18/L25 subcomplex. Contacts the 5S and 23S rRNAs.

Functionally, this is one of the proteins that bind and probably mediate the attachment of the 5S RNA into the large ribosomal subunit, where it forms part of the central protuberance. The chain is Large ribosomal subunit protein uL18 from Staphylococcus aureus (strain bovine RF122 / ET3-1).